A 322-amino-acid chain; its full sequence is Transcription factor IIIA (322 aa).

C2H2-type zinc fingers lie at residues 12–36 (FVCS…YCKH), 42–64 (FACD…NLSH), 70–95 (YQCL…ERVH), 102–126 (YVCD…KCEH), 132–156 (FECQ…EKVH), 159–184 (YPCA…KAAH), 188–211 (LQCD…LFVH), 218–243 (FKCT…LSFH), and 249–273 (FICP…AVVH). Residues 272–322 (VHDPQKKKLQKKTKRGRKKKLEPKTNVSDDSELPAQLHGLSLNTSTSQNNP) form a disordered region. Residues 278 to 292 (KKLQKKTKRGRKKKL) show a composition bias toward basic residues. Polar residues predominate over residues 312–322 (SLNTSTSQNNP).

The protein localises to the nucleus. In terms of biological role, involved in ribosomal large subunit biogenesis. Interacts with the internal control region (ICR) of approximately 50 bases within the 5S RNA genes, is required for correct transcription of these genes by RNA polymerase III. Also binds the transcribed 5S RNA's. The polypeptide is Transcription factor IIIA (gtf3a) (Ictalurus punctatus (Channel catfish)).